The sequence spans 101 residues: Gamma-secretase subunit PEN-2 (101 aa).

At 1 to 17 (MNLERVSNEEKLNLCRK) the chain is on the cytoplasmic side. The segment at residues 18-36 (YYLGGFAFLPFLWLVNIFW) is an intramembrane region (helical). Topologically, residues 37 to 57 (FFKEAFFAPAYTEQSQIKGYV) are cytoplasmic. The helical transmembrane segment at 58-78 (WRSAVGFLFWVIVLTTWITIF) threads the bilayer. Over 79 to 101 (QIYRPRWGALGDYLSFTIPLGTP) the chain is Lumenal.

It belongs to the PEN-2 family. As to quaternary structure, the functional gamma-secretase complex is composed of at least four polypeptides: a presenilin homodimer (PSEN1 or PSEN2), nicastrin (NCSTN), APH1 (APH1A or APH1B) and PSENEN.

It is found in the endoplasmic reticulum membrane. It localises to the golgi apparatus. The protein resides in the golgi stack membrane. The protein localises to the cell membrane. Its subcellular location is the membrane. Functionally, essential subunit of the gamma-secretase complex, an endoprotease complex that catalyzes the intramembrane cleavage of integral membrane proteins such as Notch receptors and APP (amyloid-beta precursor protein). The gamma-secretase complex plays a role in Notch and Wnt signaling cascades and regulation of downstream processes via its role in processing key regulatory proteins, and by regulating cytosolic CTNNB1 levels. PSENEN modulates both endoproteolysis of presenilin and gamma-secretase activity. The protein is Gamma-secretase subunit PEN-2 (Psenen) of Rattus norvegicus (Rat).